A 150-amino-acid chain; its full sequence is Large ribosomal subunit protein bL9 (150 aa).

The protein belongs to the bacterial ribosomal protein bL9 family.

Binds to the 23S rRNA. The polypeptide is Large ribosomal subunit protein bL9 (Burkholderia cenocepacia (strain HI2424)).